Consider the following 430-residue polypeptide: uncharacterized protein (430 aa).

The protein resides in the cytoplasm. Its subcellular location is the nucleus. This is an uncharacterized protein from Schizosaccharomyces pombe (strain 972 / ATCC 24843) (Fission yeast).